We begin with the raw amino-acid sequence, 160 residues long: MSEISTALSEDCPCQSGHHYADCCGKFHLRQAFPETAEQLMRSRYTAYVLKNIPYIVVTTVPSQQTLLEPRLLQEWADNTTWLGLEILKTESLTKTQSAVEFKAIFQGEECEQAHQERSIFVKIEDRWYFVDPTVSLPTMKQPCVCGSGKKFKHCCGGFL.

This sequence belongs to the UPF0225 family.

This Haemophilus influenzae (strain PittEE) protein is UPF0225 protein CGSHiEE_01665.